A 692-amino-acid chain; its full sequence is Elongation factor G (692 aa).

The tr-type G domain occupies Asp9 to Leu283. GTP-binding positions include Ala18–Thr25, Asp82–His86, and Asn136–Asp139.

The protein belongs to the TRAFAC class translation factor GTPase superfamily. Classic translation factor GTPase family. EF-G/EF-2 subfamily.

The protein localises to the cytoplasm. Functionally, catalyzes the GTP-dependent ribosomal translocation step during translation elongation. During this step, the ribosome changes from the pre-translocational (PRE) to the post-translocational (POST) state as the newly formed A-site-bound peptidyl-tRNA and P-site-bound deacylated tRNA move to the P and E sites, respectively. Catalyzes the coordinated movement of the two tRNA molecules, the mRNA and conformational changes in the ribosome. This is Elongation factor G (fusA) from Thermotoga maritima (strain ATCC 43589 / DSM 3109 / JCM 10099 / NBRC 100826 / MSB8).